The sequence spans 427 residues: Glutamate-1-semialdehyde 2,1-aminomutase (427 aa).

Residue K265 is modified to N6-(pyridoxal phosphate)lysine.

It belongs to the class-III pyridoxal-phosphate-dependent aminotransferase family. HemL subfamily. As to quaternary structure, homodimer. Pyridoxal 5'-phosphate serves as cofactor.

The protein localises to the cytoplasm. The catalysed reaction is (S)-4-amino-5-oxopentanoate = 5-aminolevulinate. It functions in the pathway porphyrin-containing compound metabolism; protoporphyrin-IX biosynthesis; 5-aminolevulinate from L-glutamyl-tRNA(Glu): step 2/2. The sequence is that of Glutamate-1-semialdehyde 2,1-aminomutase from Mannheimia succiniciproducens (strain KCTC 0769BP / MBEL55E).